We begin with the raw amino-acid sequence, 315 residues long: MQKPWVEKYRPENLDEVVGHQEIIKRLKNYVEKKSMPHLLFSGSPGVGKTTAALCLAKDLYGNTWKENFLELNSSDERGIDVIRTKVKDFARTKPIGDAPFKVIFLDESDALTSDAQNALRRTMEKYSDICRFVLSCNYPSKIIPPIQSRCAIFRFSPLKTEDLVKNLKEISEKESINVEKSGMDAIIYVSEGDMRKAINVLQTGAAVSKNINETVIYKVASKARPDEIKKMTELALNGKFVEAREQLYKLMIDWGMSGEDIIIQIFREVPNLEISEKEKVHLVEAIGECDFRIVEGANERIQLSALLAKMGILE.

43–50 (GSPGVGKT) contacts ATP.

The protein belongs to the activator 1 small subunits family. RfcS subfamily. Heteromultimer composed of small subunits (RfcS) and large subunits (RfcL).

In terms of biological role, part of the RFC clamp loader complex which loads the PCNA sliding clamp onto DNA. The protein is Replication factor C small subunit of Methanococcus vannielii (strain ATCC 35089 / DSM 1224 / JCM 13029 / OCM 148 / SB).